We begin with the raw amino-acid sequence, 179 residues long: Large ribosomal subunit protein uL6 (179 aa).

Belongs to the universal ribosomal protein uL6 family. In terms of assembly, part of the 50S ribosomal subunit.

Functionally, this protein binds to the 23S rRNA, and is important in its secondary structure. It is located near the subunit interface in the base of the L7/L12 stalk, and near the tRNA binding site of the peptidyltransferase center. This chain is Large ribosomal subunit protein uL6, found in Bifidobacterium longum subsp. infantis (strain ATCC 15697 / DSM 20088 / JCM 1222 / NCTC 11817 / S12).